The following is a 254-amino-acid chain: Phosphoribosylaminoimidazole-succinocarboxamide synthase (254 aa).

Belongs to the SAICAR synthetase family.

It catalyses the reaction 5-amino-1-(5-phospho-D-ribosyl)imidazole-4-carboxylate + L-aspartate + ATP = (2S)-2-[5-amino-1-(5-phospho-beta-D-ribosyl)imidazole-4-carboxamido]succinate + ADP + phosphate + 2 H(+). Its pathway is purine metabolism; IMP biosynthesis via de novo pathway; 5-amino-1-(5-phospho-D-ribosyl)imidazole-4-carboxamide from 5-amino-1-(5-phospho-D-ribosyl)imidazole-4-carboxylate: step 1/2. The sequence is that of Phosphoribosylaminoimidazole-succinocarboxamide synthase from Rhodospirillum centenum (strain ATCC 51521 / SW).